Reading from the N-terminus, the 299-residue chain is MTKIKIVVIVGPTAVGKTALGISLAKAFNGEIISGDSQQVYRQLDIGTAKATQEEQEAAVHHLIDIREVTESYSAYDFVQDAQKSISDIVSRGKLPIIVGGTGLYLQSLLEGYHLGGQVDQEAVKAYRNELEQLDDHDLYERLQVNNITIEQVNRRRAIRALELAQFADELENAETAYEPLIIGLNDDRQVIYDRINQRVNRMIENGLLEEAKWLYEHYPTVQASRGIGYKELFPYFVGEMTLAEASDQLKQNTRRFAKRQLTWFRNRMAVSFTAITAPDYPQVVHDRVRDFLGQKEKS.

11-18 contacts ATP; it reads GPTAVGKT. 13–18 is a substrate binding site; that stretch reads TAVGKT. Positions 36–39 are interaction with substrate tRNA; sequence DSQQ.

The protein belongs to the IPP transferase family. As to quaternary structure, monomer. It depends on Mg(2+) as a cofactor.

It carries out the reaction adenosine(37) in tRNA + dimethylallyl diphosphate = N(6)-dimethylallyladenosine(37) in tRNA + diphosphate. Functionally, catalyzes the transfer of a dimethylallyl group onto the adenine at position 37 in tRNAs that read codons beginning with uridine, leading to the formation of N6-(dimethylallyl)adenosine (i(6)A). In Streptococcus pyogenes serotype M1, this protein is tRNA dimethylallyltransferase.